A 278-amino-acid polypeptide reads, in one-letter code: Sulfur carrier protein FdhD (278 aa).

Cys117 acts as the Cysteine persulfide intermediate in catalysis.

It belongs to the FdhD family.

The protein resides in the cytoplasm. Required for formate dehydrogenase (FDH) activity. Acts as a sulfur carrier protein that transfers sulfur from IscS to the molybdenum cofactor prior to its insertion into FDH. The polypeptide is Sulfur carrier protein FdhD (Variovorax paradoxus (strain S110)).